A 443-amino-acid chain; its full sequence is Squalene synthase (443 aa).

2 helical membrane-spanning segments follow: residues 291 to 311 and 423 to 443; these read TSFNFCAIPQVMAIATLELVF and ILLLSLGVAVFGVVYGVVRII.

This sequence belongs to the phytoene/squalene synthase family. It depends on Mg(2+) as a cofactor.

It localises to the endoplasmic reticulum membrane. The catalysed reaction is 2 (2E,6E)-farnesyl diphosphate + NADPH + H(+) = squalene + 2 diphosphate + NADP(+). It carries out the reaction 2 (2E,6E)-farnesyl diphosphate + NADH + H(+) = squalene + 2 diphosphate + NAD(+). It functions in the pathway terpene metabolism; lanosterol biosynthesis; lanosterol from farnesyl diphosphate: step 1/3. In terms of biological role, catalyzes the condensation of 2 two farnesyl pyrophosphate moieties to form squalene. It is the first committed enzyme of the sterol biosynthesis pathway. Required for the biosynthesis of ergosterol. The polypeptide is Squalene synthase (ERG9) (Cyberlindnera jadinii (Torula yeast)).